The following is a 505-amino-acid chain: Probable glycine dehydrogenase (decarboxylating) subunit 2 (505 aa).

An N6-(pyridoxal phosphate)lysine modification is found at Lys-274.

Belongs to the GcvP family. C-terminal subunit subfamily. The glycine cleavage system is composed of four proteins: P, T, L and H. In this organism, the P 'protein' is a heterodimer of two subunits. Requires pyridoxal 5'-phosphate as cofactor.

It carries out the reaction N(6)-[(R)-lipoyl]-L-lysyl-[glycine-cleavage complex H protein] + glycine + H(+) = N(6)-[(R)-S(8)-aminomethyldihydrolipoyl]-L-lysyl-[glycine-cleavage complex H protein] + CO2. Functionally, the glycine cleavage system catalyzes the degradation of glycine. The P protein binds the alpha-amino group of glycine through its pyridoxal phosphate cofactor; CO(2) is released and the remaining methylamine moiety is then transferred to the lipoamide cofactor of the H protein. In Sulfurisphaera tokodaii (strain DSM 16993 / JCM 10545 / NBRC 100140 / 7) (Sulfolobus tokodaii), this protein is Probable glycine dehydrogenase (decarboxylating) subunit 2.